Here is a 717-residue protein sequence, read N- to C-terminus: ATP-dependent RNA helicase homolog DQX1 (717 aa).

Positions 57 to 225 constitute a Helicase ATP-binding domain; that stretch reads QLESNPTGVV…WGNPPIVHIP (169 aa). 70 to 77 contributes to the ATP binding site; it reads GEPGSGKS. Positions 170–173 match the DEAQ box motif; it reads DEAQ. The Helicase C-terminal domain maps to 248-447; the sequence is ACQAVLELCR…ALMQALEDLD (200 aa). The disordered stretch occupies residues 694–717; it reads GMADSTAGSKSSSAQEFRDPCVLQ. The segment covering 699–708 has biased composition (polar residues); the sequence is TAGSKSSSAQ.

The protein localises to the nucleus. Might be involved in RNA metabolism; it is missing helicase motif III and may not have helicase activity. The polypeptide is ATP-dependent RNA helicase homolog DQX1 (DQX1) (Homo sapiens (Human)).